We begin with the raw amino-acid sequence, 117 residues long: Large ribosomal subunit protein bL20 (117 aa).

Belongs to the bacterial ribosomal protein bL20 family.

Binds directly to 23S ribosomal RNA and is necessary for the in vitro assembly process of the 50S ribosomal subunit. It is not involved in the protein synthesizing functions of that subunit. In Chromohalobacter salexigens (strain ATCC BAA-138 / DSM 3043 / CIP 106854 / NCIMB 13768 / 1H11), this protein is Large ribosomal subunit protein bL20.